A 314-amino-acid polypeptide reads, in one-letter code: Ecto-ADP-ribosyltransferase 4 (314 aa).

Positions 1–46 (MGPLINRCKKILLPTTVPPATMRIWLLGGLLPFLLLLSGLQRPTEG) are cleaved as a signal peptide. Intrachain disulfides connect Cys69/Cys280 and Cys182/Cys231. A TR mART core domain is found at 91 to 276 (KNYFRMWQKA…LQLRSTGNLS (186 aa)). Asn114 carries an N-linked (GlcNAc...) asparagine glycan. An NAD(+)-binding site is contributed by Tyr126. The N-linked (GlcNAc...) asparagine glycan is linked to Asn178. Position 206 (Gln206) interacts with NAD(+). A glycan (N-linked (GlcNAc...) asparagine) is linked at Asn222. Ser240 contributes to the NAD(+) binding site. N-linked (GlcNAc...) asparagine glycosylation is found at Asn257 and Asn274. The GPI-anchor amidated alanine moiety is linked to residue Ala285. A propeptide spans 286 to 314 (SSKKCIPDPIAIASLSFLTSVIIFSKSRV) (removed in mature form).

Belongs to the Arg-specific ADP-ribosyltransferase family. Expressed in spleen and T-cells.

The protein localises to the cell membrane. It carries out the reaction L-arginyl-[protein] + NAD(+) = N(omega)-(ADP-D-ribosyl)-L-arginyl-[protein] + nicotinamide + H(+). The chain is Ecto-ADP-ribosyltransferase 4 (ART4) from Homo sapiens (Human).